The sequence spans 231 residues: Ion-translocating oxidoreductase complex subunit E (231 aa).

6 helical membrane-spanning segments follow: residues 18–38, 39–59, 63–83, 86–106, 125–145, and 182–202; these read ALVQ…ATNA, LGLG…ISTL, TPAE…VSAV, LINA…PLIV, ALSA…MFVL, and PFLL…MLAG.

The protein belongs to the NqrDE/RnfAE family. The complex is composed of six subunits: RsxA, RsxB, RsxC, RsxD, RsxE and RsxG.

It localises to the cell inner membrane. Part of a membrane-bound complex that couples electron transfer with translocation of ions across the membrane. Required to maintain the reduced state of SoxR. The chain is Ion-translocating oxidoreductase complex subunit E from Escherichia coli O6:H1 (strain CFT073 / ATCC 700928 / UPEC).